The primary structure comprises 269 residues: tRNA pseudouridine synthase A (269 aa).

Catalysis depends on Asp51, which acts as the Nucleophile. Tyr109 is a binding site for substrate.

The protein belongs to the tRNA pseudouridine synthase TruA family. In terms of assembly, homodimer.

It carries out the reaction uridine(38/39/40) in tRNA = pseudouridine(38/39/40) in tRNA. Functionally, formation of pseudouridine at positions 38, 39 and 40 in the anticodon stem and loop of transfer RNAs. The polypeptide is tRNA pseudouridine synthase A (Haemophilus influenzae (strain PittGG)).